The sequence spans 254 residues: Methyltransferase-like protein 23 (254 aa).

A disordered region spans residues 1-27; it reads MKSFIFRQNPRKQQQEQNNLVDYSDSD. Residues 11–21 are compositionally biased toward polar residues; it reads RKQQQEQNNLV.

It belongs to the methyltransferase superfamily. METTL23 family.

Probable methyltransferase. The sequence is that of Methyltransferase-like protein 23 from Dictyostelium discoideum (Social amoeba).